A 225-amino-acid chain; its full sequence is Uridylate kinase (225 aa).

9–10 (GS) contacts ATP. Residue Gly46 participates in UMP binding. ATP is bound by residues Gly47 and Arg51. UMP-binding positions include Asp67 and 115–121 (THPAHTT). 4 residues coordinate ATP: Thr141, Asn142, Tyr147, and Asp150.

Belongs to the UMP kinase family. In terms of assembly, homohexamer.

The protein localises to the cytoplasm. It catalyses the reaction UMP + ATP = UDP + ADP. It participates in pyrimidine metabolism; CTP biosynthesis via de novo pathway; UDP from UMP (UMPK route): step 1/1. With respect to regulation, inhibited by UTP. Catalyzes the reversible phosphorylation of UMP to UDP. In Methanococcus maripaludis (strain C7 / ATCC BAA-1331), this protein is Uridylate kinase.